We begin with the raw amino-acid sequence, 132 residues long: Small ribosomal subunit protein uS8c (132 aa).

The protein belongs to the universal ribosomal protein uS8 family. In terms of assembly, part of the 30S ribosomal subunit.

It localises to the plastid. The protein resides in the chloroplast. In terms of biological role, one of the primary rRNA binding proteins, it binds directly to 16S rRNA central domain where it helps coordinate assembly of the platform of the 30S subunit. The sequence is that of Small ribosomal subunit protein uS8c (rps8) from Adiantum capillus-veneris (Maidenhair fern).